The chain runs to 201 residues: Homeobox protein ceh-28 (201 aa).

Residues 72-84 show a composition bias toward polar residues; that stretch reads SYYSSPSQNQRSY. The tract at residues 72–94 is disordered; it reads SYYSSPSQNQRSYQNHRQHSNPD. Positions 104–163 form a DNA-binding region, homeobox; the sequence is KRKPRVLFTQHQVNELEERFKKQRYVTATEREELAQCLGLTATQVKIWFQNRRYKCKRLA.

Belongs to the NK-2 homeobox family.

The protein resides in the nucleus. Probable transcription factor that regulates neuronal differention, including synapse assembly of the cholinergic motor neuron M4. Activates expression of growth factor, neuropeptide and transcription factor genes, such as TGF-beta dbl-1, FMRFamide-like flp-5 and transcription repressor zag-1, in the M4 neuron. Required for pharynx peristalsis. This chain is Homeobox protein ceh-28, found in Caenorhabditis elegans.